A 321-amino-acid chain; its full sequence is Tetraacyldisaccharide 4'-kinase (321 aa).

Ser54–Thr61 provides a ligand contact to ATP.

The protein belongs to the LpxK family.

The enzyme catalyses a lipid A disaccharide + ATP = a lipid IVA + ADP + H(+). Its pathway is glycolipid biosynthesis; lipid IV(A) biosynthesis; lipid IV(A) from (3R)-3-hydroxytetradecanoyl-[acyl-carrier-protein] and UDP-N-acetyl-alpha-D-glucosamine: step 6/6. Transfers the gamma-phosphate of ATP to the 4'-position of a tetraacyldisaccharide 1-phosphate intermediate (termed DS-1-P) to form tetraacyldisaccharide 1,4'-bis-phosphate (lipid IVA). The sequence is that of Tetraacyldisaccharide 4'-kinase from Rickettsia peacockii (strain Rustic).